The sequence spans 55 residues: Large ribosomal subunit protein bL32 (55 aa).

Positions 1–28 (MAVQQNKPTRSKRGMRRSHDALTTATLS) are disordered.

This sequence belongs to the bacterial ribosomal protein bL32 family.

This chain is Large ribosomal subunit protein bL32, found in Serratia proteamaculans (strain 568).